Reading from the N-terminus, the 87-residue chain is Small ribosomal subunit protein bS20 (87 aa).

Basic residues predominate over residues 1–11; that stretch reads MANIKSAKKRA. Residues 1–27 form a disordered region; that stretch reads MANIKSAKKRAVQSEKRRQHNASQRSM.

It belongs to the bacterial ribosomal protein bS20 family.

Binds directly to 16S ribosomal RNA. This is Small ribosomal subunit protein bS20 from Haemophilus influenzae (strain PittEE).